The following is a 131-amino-acid chain: Secreted RxLR effector protein 45 (131 aa).

A signal peptide spans methionine 1–glutamine 16. The short motif at arginine 56–arginine 59 is the RxLR element. An N-linked (GlcNAc...) asparagine glycan is attached at asparagine 128.

The protein belongs to the RxLR effector family.

It is found in the secreted. It localises to the host nucleus. Its function is as follows. Secreted effector that completely suppresses the host cell death induced by cell death-inducing proteins. The protein is Secreted RxLR effector protein 45 of Plasmopara viticola (Downy mildew of grapevine).